A 366-amino-acid chain; its full sequence is Histidinol-phosphate aminotransferase (366 aa).

The residue at position 227 (K227) is an N6-(pyridoxal phosphate)lysine.

It belongs to the class-II pyridoxal-phosphate-dependent aminotransferase family. Histidinol-phosphate aminotransferase subfamily. As to quaternary structure, homodimer. Pyridoxal 5'-phosphate serves as cofactor.

It catalyses the reaction L-histidinol phosphate + 2-oxoglutarate = 3-(imidazol-4-yl)-2-oxopropyl phosphate + L-glutamate. Its pathway is amino-acid biosynthesis; L-histidine biosynthesis; L-histidine from 5-phospho-alpha-D-ribose 1-diphosphate: step 7/9. The chain is Histidinol-phosphate aminotransferase from Campylobacter hominis (strain ATCC BAA-381 / DSM 21671 / CCUG 45161 / LMG 19568 / NCTC 13146 / CH001A).